The sequence spans 393 residues: COP9 signalosome complex subunit 4 (393 aa).

The region spanning 197-362 (MFLKASLRYY…RLIQFENVGD (166 aa)) is the PCI domain.

Belongs to the CSN4 family. Component of the CSN complex. The holocomplex is comprised of 8 subunits csn1-8. In the complex, it probably interacts directly with csn1, csn2, csn3, csn4, csn6 and csn8.

The protein resides in the cytoplasm. The protein localises to the nucleus. Its function is as follows. Component of the COP9 signalosome complex (CSN), a complex involved in various cellular and developmental processes. The CSN complex is an essential regulator of the ubiquitin (Ubl) conjugation pathway by mediating the deneddylation of the cullin subunits of E3 ligase complexes, leading to modify the Ubl ligase activity. The protein is COP9 signalosome complex subunit 4 (csn4) of Dictyostelium discoideum (Social amoeba).